The following is a 239-amino-acid chain: MRKNGRGELDLRPILLEPRVSKHAEGSCLVRFGDTHVLCTASVDEKVPPHVYGTGAGWVTAEYGMLPRSTHERMQREAARGKQTGRTLEIQRLVGRALRAAVDLRAIGPRTVTLDCDVIQADGGTRTAAITGAYVALVQAVRGIQKRRQLAQDPVKRSVAAVSVGIVAGQVHLDLDYDEDSTAEVDMNVVATGDGALVEVQGTAEGKPFPRAELDRMLDAALAGLSRLKELQEAALRTP.

Phosphate is bound by residues R86 and 124 to 126 (GTR).

Belongs to the RNase PH family. Homohexameric ring arranged as a trimer of dimers.

The catalysed reaction is tRNA(n+1) + phosphate = tRNA(n) + a ribonucleoside 5'-diphosphate. Phosphorolytic 3'-5' exoribonuclease that plays an important role in tRNA 3'-end maturation. Removes nucleotide residues following the 3'-CCA terminus of tRNAs; can also add nucleotides to the ends of RNA molecules by using nucleoside diphosphates as substrates, but this may not be physiologically important. Probably plays a role in initiation of 16S rRNA degradation (leading to ribosome degradation) during starvation. In Anaeromyxobacter dehalogenans (strain 2CP-1 / ATCC BAA-258), this protein is Ribonuclease PH.